The primary structure comprises 106 residues: UPF0091 protein RC0354 (106 aa).

Belongs to the UPF0091 family.

This is UPF0091 protein RC0354 from Rickettsia conorii (strain ATCC VR-613 / Malish 7).